The following is a 207-amino-acid chain: MPKVALYNQAGSQVGDIELSDAVFGIEPNENVLHDAVVMQQASLRQGTHKTKTRSEVRGGGRKPWRQKGTGRARQGSIRSPQWVGGGTVFGPTPRSYSYKLPKKVRRLAIKSALSSKVKAEEIVVLESLALEAPKTKEMASILSGLSVDRKALVVTADYNDNVALSARNIPGVTFVTAEGVNVLDVIKHDKLIITKDAVEKVEEVLA.

Residues Leu-44–Ile-78 are disordered. The span at Gly-60–Gly-71 shows a compositional bias: basic residues.

It belongs to the universal ribosomal protein uL4 family. As to quaternary structure, part of the 50S ribosomal subunit.

Functionally, one of the primary rRNA binding proteins, this protein initially binds near the 5'-end of the 23S rRNA. It is important during the early stages of 50S assembly. It makes multiple contacts with different domains of the 23S rRNA in the assembled 50S subunit and ribosome. Forms part of the polypeptide exit tunnel. This is Large ribosomal subunit protein uL4 from Halalkalibacterium halodurans (strain ATCC BAA-125 / DSM 18197 / FERM 7344 / JCM 9153 / C-125) (Bacillus halodurans).